The sequence spans 255 residues: 5-oxoprolinase subunit A (255 aa).

The protein belongs to the LamB/PxpA family. In terms of assembly, forms a complex composed of PxpA, PxpB and PxpC.

The catalysed reaction is 5-oxo-L-proline + ATP + 2 H2O = L-glutamate + ADP + phosphate + H(+). Its function is as follows. Catalyzes the cleavage of 5-oxoproline to form L-glutamate coupled to the hydrolysis of ATP to ADP and inorganic phosphate. In Pyrococcus furiosus (strain ATCC 43587 / DSM 3638 / JCM 8422 / Vc1), this protein is 5-oxoprolinase subunit A.